A 149-amino-acid chain; its full sequence is Nucleoside diphosphate kinase (149 aa).

Residues Lys-9, Phe-57, Arg-85, Thr-91, Arg-102, and Asn-112 each coordinate ATP. His-115 serves as the catalytic Pros-phosphohistidine intermediate.

The protein belongs to the NDK family. Homotetramer. The cofactor is Mg(2+).

The protein localises to the cytoplasm. It carries out the reaction a 2'-deoxyribonucleoside 5'-diphosphate + ATP = a 2'-deoxyribonucleoside 5'-triphosphate + ADP. The catalysed reaction is a ribonucleoside 5'-diphosphate + ATP = a ribonucleoside 5'-triphosphate + ADP. Its function is as follows. Major role in the synthesis of nucleoside triphosphates other than ATP. The ATP gamma phosphate is transferred to the NDP beta phosphate via a ping-pong mechanism, using a phosphorylated active-site intermediate. This is Nucleoside diphosphate kinase from Staphylococcus epidermidis (strain ATCC 35984 / DSM 28319 / BCRC 17069 / CCUG 31568 / BM 3577 / RP62A).